Reading from the N-terminus, the 481-residue chain is Zinc metalloproteinase/disintegrin (481 aa).

Residues 1–20 form the signal peptide; that stretch reads MIQVLLVTICLAVFPYQGSS. A propeptide spanning residues 21–190 is cleaved from the precursor; the sequence is IILESGNVDD…KASQLYLTPE (170 aa). In terms of domain architecture, Peptidase M12B spans 197 to 392; it reads RYIKLAIVVD…DNPQCILNAP (196 aa). 3 disulfides stabilise this stretch: cysteine 308–cysteine 387, cysteine 349–cysteine 371, and cysteine 351–cysteine 354. Histidine 333 contributes to the Zn(2+) binding site. Glutamate 334 is a catalytic residue. Zn(2+) is bound by residues histidine 337 and histidine 343. A propeptide spanning residues 393–408 is cleaved from the precursor; the sequence is LRTDTVSTPVSGNEFL. Positions 400 to 481 constitute a Disintegrin domain; sequence TPVSGNEFLE…GDCPRNPFHA (82 aa). 6 disulfide bridges follow: cysteine 414/cysteine 429, cysteine 416/cysteine 424, cysteine 423/cysteine 446, cysteine 437/cysteine 443, cysteine 442/cysteine 467, and cysteine 455/cysteine 474. The Cell attachment site motif lies at 459–461; the sequence is RGD.

This sequence belongs to the venom metalloproteinase (M12B) family. P-II subfamily. P-IIa sub-subfamily. Monomer. The cofactor is Zn(2+). As to expression, expressed by the venom gland.

It localises to the secreted. Functionally, impairs hemostasis in the envenomed animal. In terms of biological role, disintegrin elegantin-2a-f: inhibits platelet aggregation induced by ADP, thrombin, platelet-activating factor and collagen. Acts by inhibiting fibrinogen interaction with platelet receptors GPIIb/GPIIIa (ITGA2B/ITGB3). The sequence is that of Zinc metalloproteinase/disintegrin from Protobothrops elegans (Elegant pitviper).